We begin with the raw amino-acid sequence, 338 residues long: 1-aminocyclopropane-1-carboxylate deaminase (338 aa).

K51 bears the N6-(pyridoxal phosphate)lysine mark. The Nucleophile role is filled by S78.

This sequence belongs to the ACC deaminase/D-cysteine desulfhydrase family. Homotrimer. Pyridoxal 5'-phosphate serves as cofactor.

It carries out the reaction 1-aminocyclopropane-1-carboxylate + H2O = 2-oxobutanoate + NH4(+). Functionally, catalyzes a cyclopropane ring-opening reaction, the irreversible conversion of 1-aminocyclopropane-1-carboxylate (ACC) to ammonia and alpha-ketobutyrate. Allows growth on ACC as a nitrogen source. This chain is 1-aminocyclopropane-1-carboxylate deaminase, found in Burkholderia multivorans (strain ATCC 17616 / 249).